The following is a 1384-amino-acid chain: ABC transporter C family member 2 (1384 aa).

In terms of domain architecture, ABC transmembrane type-1 1 spans 104-388; it reads NKISVATKIF…LPEAIHRALS (285 aa). 5 consecutive transmembrane segments (helical) span residues 112 to 132, 140 to 160, 226 to 246, 247 to 267, and 333 to 353; these read IFVAIVSILSPLCLKYFIYYI, TFKFGFLLCVLLFLSSLSLTL, IFVFPFQILALLILLCWIVGL, SGLVGFGVMVVSIPLCTFLST, and MITQVTSALVLVATFSTYALT. The ABC transporter 1 domain occupies 505–724; sequence IEYDGAVQPS…GIDFESIMKT (220 aa). Residue 537–544 participates in ATP binding; it reads GIVGSGKT. The disordered stretch occupies residues 729 to 756; the sequence is IDENDQSSTSTTDKKSSTSSSSSELKKS. The segment covering 735–756 has biased composition (low complexity); it reads SSTSTTDKKSSTSSSSSELKKS. 5 helical membrane-spanning segments follow: residues 813-833, 852-872, 941-961, 1036-1056, and 1061-1081; these read LFFLTCALYFISQIIFQLSDF, ILYYCIFIGAFIVFLVVRYFM, LFMMIYITPLISIPFAILVVV, GIRLEFITALIVFFTAFSSLF, and GFSVLAVTTALGICSYLNWTI. One can recognise an ABC transmembrane type-1 2 domain in the interval 814–1093; that stretch reads FFLTCALYFI…MTELEVKMNS (280 aa). Positions 1137–1371 constitute an ABC transporter 2 domain; that stretch reads VEFKNVEIKY…EGSRFKKLVK (235 aa). 1171-1178 provides a ligand contact to ATP; it reads GRTGAGKS.

The protein belongs to the ABC transporter superfamily. ABCC family. Conjugate transporter (TC 3.A.1.208) subfamily.

It localises to the membrane. The polypeptide is ABC transporter C family member 2 (abcC2) (Dictyostelium discoideum (Social amoeba)).